Here is a 599-residue protein sequence, read N- to C-terminus: Aspartate--tRNA ligase (599 aa).

E180 contributes to the L-aspartate binding site. An aspartate region spans residues 204-207 (QIFK). Residue R226 participates in L-aspartate binding. ATP contacts are provided by residues 226 to 228 (RDE) and Q235. H454 serves as a coordination point for L-aspartate. E488 contributes to the ATP binding site. R495 serves as a coordination point for L-aspartate. 540–543 (GLDR) is an ATP binding site.

Belongs to the class-II aminoacyl-tRNA synthetase family. Type 1 subfamily. As to quaternary structure, homodimer.

The protein resides in the cytoplasm. The catalysed reaction is tRNA(Asp) + L-aspartate + ATP = L-aspartyl-tRNA(Asp) + AMP + diphosphate. Catalyzes the attachment of L-aspartate to tRNA(Asp) in a two-step reaction: L-aspartate is first activated by ATP to form Asp-AMP and then transferred to the acceptor end of tRNA(Asp). The sequence is that of Aspartate--tRNA ligase from Clostridium botulinum (strain Eklund 17B / Type B).